Consider the following 119-residue polypeptide: Gibberellin-regulated protein 9 (119 aa).

The signal sequence occupies residues 1–24; that stretch reads MKKMNVVAFVTLIISFLLLSQVLA.

The protein belongs to the GASA family. Post-translationally, six disulfide bonds may be present.

The protein resides in the secreted. Functionally, gibberellin-regulated protein that may function in hormonal controlled steps of development such as seed germination, flowering and seed maturation. This Arabidopsis thaliana (Mouse-ear cress) protein is Gibberellin-regulated protein 9 (GASA9).